A 33-amino-acid chain; its full sequence is Beta-theraphotoxin-Cm1b (33 aa).

3 disulfides stabilise this stretch: Cys2/Cys17, Cys9/Cys22, and Cys16/Cys29. At Leu33 the chain carries Leucine amide.

The protein belongs to the neurotoxin 10 (Hwtx-1) family. 04 (CcoTx1) subfamily. Expressed by the venom gland.

It localises to the secreted. Its function is as follows. Inhibits several voltage-gated sodium channels and only one voltage-gated calcium channel (Cav2.2/CACNA1B (IC(50)=1.1 uM) and Nav1.2/SCN2A (IC(50)=3.7-80 nM), Nav1.3/SCN3A (IC(50)=88-5570 nM), Nav1.1/SCN1A (IC(50)=170-407 nM), Nav1.7/SCN9A (IC(50)=95.5-230 nM), Nav1.6/SCN6A (IC(50)=49.9-3990 nM), Nav1.4/SCN4A (IC(50)=113-400 nM or &gt;10 uM), Nav1.5/SCN5A (IC(50)=1524-1634 nM or &gt;10 uM)). The toxin acts by shifting the voltage dependence of channel activation to more depolarized potentials and by blocking the inward component of the sodium current. It shows moderate affinity for lipid bilayers without cholesterol and high affinity for lipid bilayers containing cholesterol. In vivo, this toxin causes general ataxia, lack of response to stimuli, and semiparalysis. After a few minutes, the mice are unable to stand, and breathing is reduced in rhythm and intensity. Symptoms gradually increase with progressive slowing of breathing and flaccid paralysis; death occurred within 10 to 20 minutes post injection. Animals remain totally flaccid, and no symptoms of excitatory neurotoxicity are observed. In Ceratogyrus marshalli (Straighthorned baboon tarantula), this protein is Beta-theraphotoxin-Cm1b.